Reading from the N-terminus, the 258-residue chain is Malonyl-[acyl-carrier protein] O-methyltransferase (258 aa).

This sequence belongs to the methyltransferase superfamily.

The catalysed reaction is malonyl-[ACP] + S-adenosyl-L-methionine = malonyl-[ACP] methyl ester + S-adenosyl-L-homocysteine. Its pathway is cofactor biosynthesis; biotin biosynthesis. Converts the free carboxyl group of a malonyl-thioester to its methyl ester by transfer of a methyl group from S-adenosyl-L-methionine (SAM). It allows to synthesize pimeloyl-ACP via the fatty acid synthetic pathway. The chain is Malonyl-[acyl-carrier protein] O-methyltransferase from Hamiltonella defensa subsp. Acyrthosiphon pisum (strain 5AT).